A 207-amino-acid chain; its full sequence is Hydrogenase expression/formation protein HoxM (207 aa).

Positions 19, 65, and 96 each coordinate Ni(2+).

It belongs to the peptidase A31 family.

Its function is as follows. Not known. Could be involved in the processing of hydrogenase. The protein is Hydrogenase expression/formation protein HoxM (hoxM) of Azotobacter vinelandii.